The sequence spans 75 residues: Pro-glucagon (75 aa).

The protein belongs to the glucagon family.

It is found in the secreted. Plays a key role in glucose metabolism and homeostasis. Regulates blood glucose by increasing gluconeogenesis and decreasing glycolysis. The polypeptide is Pro-glucagon (gcg) (Amia calva (Bowfin)).